The following is a 170-amino-acid chain: Peptide deformylase (170 aa).

Fe cation is bound by residues Cys91 and His133. Glu134 is a catalytic residue. Residue His137 coordinates Fe cation.

The protein belongs to the polypeptide deformylase family. Fe(2+) serves as cofactor.

The enzyme catalyses N-terminal N-formyl-L-methionyl-[peptide] + H2O = N-terminal L-methionyl-[peptide] + formate. Removes the formyl group from the N-terminal Met of newly synthesized proteins. Requires at least a dipeptide for an efficient rate of reaction. N-terminal L-methionine is a prerequisite for activity but the enzyme has broad specificity at other positions. The polypeptide is Peptide deformylase (Yersinia enterocolitica serotype O:8 / biotype 1B (strain NCTC 13174 / 8081)).